The chain runs to 560 residues: 2-succinylbenzoate--CoA ligase, chloroplastic/peroxisomal (560 aa).

The N-terminal 15 residues, 1-15, are a transit peptide targeting the chloroplast; sequence MANHSRPHICQCLTR. A run of 3 helical transmembrane segments spans residues 69 to 89, 189 to 209, and 225 to 245; these read LFLEWLLAVALVGGVVAPLNY, GVTISHLAFITQSLAKIAIAG, and IGGLSSAMAMLMVGACHVLLP. Positions 558–560 match the Microbody targeting signal motif; it reads SSL.

The protein belongs to the ATP-dependent AMP-binding enzyme family. MenE subfamily. High expression in young leaves and flowers. Not expressed in roots.

It localises to the plastid. It is found in the chloroplast membrane. The protein localises to the peroxisome membrane. The catalysed reaction is 2-succinylbenzoate + ATP + CoA = 2-succinylbenzoyl-CoA + AMP + diphosphate. Its function is as follows. Involved in the biosynthesis of phylloquinone (vitamin K1). Converts 2-succinylbenzoate (OSB) to 2-succinylbenzoyl-CoA (OSB-CoA). This Arabidopsis thaliana (Mouse-ear cress) protein is 2-succinylbenzoate--CoA ligase, chloroplastic/peroxisomal (AAE14).